The chain runs to 1097 residues: Error-prone DNA polymerase (1097 aa).

Residues 1039–1097 (PTGRGDEFAHGSPGGGDSRDRSPPKPRDIVVPLCRARHKGIDPEPETMPSAFPKPRDFR) form a disordered region. Over residues 1055–1066 (DSRDRSPPKPRD) the composition is skewed to basic and acidic residues.

The protein belongs to the DNA polymerase type-C family. DnaE2 subfamily.

It is found in the cytoplasm. The catalysed reaction is DNA(n) + a 2'-deoxyribonucleoside 5'-triphosphate = DNA(n+1) + diphosphate. In terms of biological role, DNA polymerase involved in damage-induced mutagenesis and translesion synthesis (TLS). It is not the major replicative DNA polymerase. In Allorhizobium ampelinum (strain ATCC BAA-846 / DSM 112012 / S4) (Agrobacterium vitis (strain S4)), this protein is Error-prone DNA polymerase.